The primary structure comprises 177 residues: CRIB domain-containing protein RIC8 (177 aa).

A CRIB domain is found at I17 to G30. Residues S72–S89 are compositionally biased toward basic and acidic residues. Residues S72 to T177 form a disordered region. The span at G158–S171 shows a compositional bias: low complexity.

Its function is as follows. Functions as a downstream effector of Rho-related GTP binding proteins of the 'Rho of Plants' (ROPs) family. Participates in the propagation of ROP GTPase signals in specific cellular responses. The protein is CRIB domain-containing protein RIC8 (RIC8) of Arabidopsis thaliana (Mouse-ear cress).